The primary structure comprises 218 residues: Small ribosomal subunit protein uS3c (218 aa).

The KH type-2 domain occupies 47–118; sequence VQKNMRIFSG…KLNIAITRIG (72 aa).

The protein belongs to the universal ribosomal protein uS3 family. In terms of assembly, part of the 30S ribosomal subunit.

It is found in the plastid. The protein localises to the chloroplast. The chain is Small ribosomal subunit protein uS3c (rps3) from Cucumis sativus (Cucumber).